Here is a 323-residue protein sequence, read N- to C-terminus: Octaprenyl diphosphate synthase (323 aa).

Isopentenyl diphosphate contacts are provided by Lys45, Arg48, and His77. Mg(2+) is bound by residues Asp84 and Asp88. Arg93 contacts an all-trans-polyprenyl diphosphate. Arg94 is an isopentenyl diphosphate binding site. Lys170, Thr171, and Gln208 together coordinate an all-trans-polyprenyl diphosphate.

Belongs to the FPP/GGPP synthase family. The cofactor is Mg(2+).

The enzyme catalyses 5 isopentenyl diphosphate + (2E,6E)-farnesyl diphosphate = all-trans-octaprenyl diphosphate + 5 diphosphate. In terms of biological role, supplies octaprenyl diphosphate, the precursor for the side chain of the isoprenoid quinones ubiquinone and menaquinone. This is Octaprenyl diphosphate synthase (ispB) from Escherichia coli (strain K12).